The following is a 317-amino-acid chain: Putative toluene-4-sulfonate monooxygenase system reductase subunit TsaB2 (317 aa).

The region spanning 4–106 (DVPVTVAAVR…SAPRNLFEMA (103 aa)) is the FAD-binding FR-type domain. 110 to 220 (RRVLLLAGGI…PGSVRMERFK (111 aa)) lines the NAD(+) pocket. The 86-residue stretch at 232–317 (FELVLQRAGL…CGGGRLVLDI (86 aa)) folds into the 2Fe-2S ferredoxin-type domain. The [2Fe-2S] cluster site is built by Cys-266, Cys-271, and Cys-274.

As to quaternary structure, monomer. Part of the p-toluenesulfonate methyl-monooxygenase complex TsaBM, comprising the reductase TsaB and the oxygenase TsaM. It depends on FMN as a cofactor.

Its function is as follows. Involved in the toluene-4-sulfonate degradation pathway. This Comamonas testosteroni (Pseudomonas testosteroni) protein is Putative toluene-4-sulfonate monooxygenase system reductase subunit TsaB2 (tsaB2).